Reading from the N-terminus, the 308-residue chain is tRNA dimethylallyltransferase (308 aa).

Position 10–17 (10–17) interacts with ATP; the sequence is GPTASGKT. Residue 12–17 coordinates substrate; sequence TASGKT. 2 interaction with substrate tRNA regions span residues 35 to 38 and 159 to 163; these read DSSL and QRIFR.

It belongs to the IPP transferase family. In terms of assembly, monomer. The cofactor is Mg(2+).

It carries out the reaction adenosine(37) in tRNA + dimethylallyl diphosphate = N(6)-dimethylallyladenosine(37) in tRNA + diphosphate. In terms of biological role, catalyzes the transfer of a dimethylallyl group onto the adenine at position 37 in tRNAs that read codons beginning with uridine, leading to the formation of N6-(dimethylallyl)adenosine (i(6)A). The protein is tRNA dimethylallyltransferase of Francisella tularensis subsp. tularensis (strain FSC 198).